Here is a 417-residue protein sequence, read N- to C-terminus: Serine hydroxymethyltransferase (417 aa).

(6S)-5,6,7,8-tetrahydrofolate contacts are provided by residues leucine 121 and glycine 125–leucine 127. N6-(pyridoxal phosphate)lysine is present on lysine 229. Serine 355 to phenylalanine 357 contributes to the (6S)-5,6,7,8-tetrahydrofolate binding site.

The protein belongs to the SHMT family. Homodimer. The cofactor is pyridoxal 5'-phosphate.

The protein resides in the cytoplasm. The catalysed reaction is (6R)-5,10-methylene-5,6,7,8-tetrahydrofolate + glycine + H2O = (6S)-5,6,7,8-tetrahydrofolate + L-serine. It functions in the pathway one-carbon metabolism; tetrahydrofolate interconversion. Its pathway is amino-acid biosynthesis; glycine biosynthesis; glycine from L-serine: step 1/1. Catalyzes the reversible interconversion of serine and glycine with tetrahydrofolate (THF) serving as the one-carbon carrier. This reaction serves as the major source of one-carbon groups required for the biosynthesis of purines, thymidylate, methionine, and other important biomolecules. Also exhibits THF-independent aldolase activity toward beta-hydroxyamino acids, producing glycine and aldehydes, via a retro-aldol mechanism. The protein is Serine hydroxymethyltransferase of Xanthomonas euvesicatoria pv. vesicatoria (strain 85-10) (Xanthomonas campestris pv. vesicatoria).